A 170-amino-acid polypeptide reads, in one-letter code: Myelin-associated oligodendrocyte basic protein (170 aa).

Positions 69–170 (SRRATSPQKP…GSPTRAPRFW (102 aa)) are disordered. A compositionally biased stretch (low complexity) spans 82-92 (PAASPVVVRAP). Phosphoserine occurs at positions 85, 98, and 107. Repeat 1 spans residues 93-101 (PAKPKSPPR). Residues 93 to 114 (PAKPKSPPRPAKPRSPPIPAKP) are compositionally biased toward pro residues. Positions 93–119 (PAKPKSPPRPAKPRSPPIPAKPRSPSR) are 3 X 9 AA approximate tandem repeats. One copy of the 2; half-length repeat lies at 105-110 (PRSPPI). Repeat unit 3 spans residues 111–119 (PAKPRSPSR). Positions 118 to 130 (SRTERQPRPRPEV) are enriched in basic and acidic residues. A compositionally biased stretch (low complexity) spans 138-151 (KPPQKSKQPARSSP).

As to expression, expressed predominantly in oligodendrocytes, in CNS myelin of the cerebrum and spinal cord. No expression seen in sciatic nerve.

The protein resides in the cytoplasm. It localises to the perinuclear region. Functionally, may play a role in compacting or stabilizing the myelin sheath, possibly by binding the negatively charged acidic phospholipids of the cytoplasmic membrane. The chain is Myelin-associated oligodendrocyte basic protein (Mobp) from Rattus norvegicus (Rat).